The following is a 60-amino-acid chain: Adenylate kinase isoenzyme 1 (60 aa).

9-14 (GSGKGT) is a binding site for ATP. Ser25 carries the phosphoserine modification. The tract at residues 25-53 (STGDLLRVDSSNGFLIDGYPRQGEEFERK) is NMP. AMP contacts are provided by Thr26 and Arg31.

This sequence belongs to the adenylate kinase family. AK1 subfamily. As to quaternary structure, monomer. It depends on Mg(2+) as a cofactor.

The protein resides in the cytoplasm. It catalyses the reaction a ribonucleoside 5'-phosphate + ATP = a ribonucleoside 5'-diphosphate + ADP. The catalysed reaction is AMP + ATP = 2 ADP. It carries out the reaction dAMP + ATP = dADP + ADP. The enzyme catalyses dATP + AMP = dADP + ADP. It catalyses the reaction dAMP + dATP = 2 dADP. The catalysed reaction is a 2'-deoxyribonucleoside 5'-diphosphate + ATP = a 2'-deoxyribonucleoside 5'-triphosphate + ADP. It carries out the reaction a ribonucleoside 5'-diphosphate + ATP = a ribonucleoside 5'-triphosphate + ADP. The enzyme catalyses CDP + GTP = CTP + GDP. It catalyses the reaction GDP + ATP = GTP + ADP. The catalysed reaction is UDP + ATP = UTP + ADP. It carries out the reaction GTP + UDP = UTP + GDP. The enzyme catalyses dTDP + GTP = dTTP + GDP. It catalyses the reaction dCDP + GTP = dCTP + GDP. The catalysed reaction is dGDP + ATP = dGTP + ADP. It carries out the reaction dADP + GTP = dATP + GDP. The enzyme catalyses thiamine diphosphate + ADP = thiamine triphosphate + AMP. Functionally, catalyzes the reversible transfer of the terminal phosphate group between ATP and AMP. Also displays broad nucleoside diphosphate kinase activity. Plays an important role in cellular energy homeostasis and in adenine nucleotide metabolism. Also catalyzes at a very low rate the synthesis of thiamine triphosphate (ThTP) from thiamine diphosphate (ThDP) and ADP. The protein is Adenylate kinase isoenzyme 1 (Ak1) of Mesocricetus auratus (Golden hamster).